The primary structure comprises 563 residues: Sulfite reductase [NADPH] hemoprotein beta-component (563 aa).

[4Fe-4S] cluster-binding residues include Cys-426, Cys-432, Cys-472, and Cys-476. Siroheme is bound at residue Cys-476.

This sequence belongs to the nitrite and sulfite reductase 4Fe-4S domain family. In terms of assembly, alpha(8)-beta(8). The alpha component is a flavoprotein, the beta component is a hemoprotein. The cofactor is siroheme. [4Fe-4S] cluster serves as cofactor.

The catalysed reaction is hydrogen sulfide + 3 NADP(+) + 3 H2O = sulfite + 3 NADPH + 4 H(+). It functions in the pathway sulfur metabolism; hydrogen sulfide biosynthesis; hydrogen sulfide from sulfite (NADPH route): step 1/1. Its function is as follows. Component of the sulfite reductase complex that catalyzes the 6-electron reduction of sulfite to sulfide. This is one of several activities required for the biosynthesis of L-cysteine from sulfate. The polypeptide is Sulfite reductase [NADPH] hemoprotein beta-component (Photobacterium profundum (strain SS9)).